A 309-amino-acid polypeptide reads, in one-letter code: Probable 4-hydroxy-2-oxoglutarate aldolase, mitochondrial (309 aa).

49–50 contacts substrate; that stretch reads SN. Residue Lys173 is the Schiff-base intermediate with substrate of the active site.

The protein belongs to the DapA family.

It catalyses the reaction (4S)-4-hydroxy-2-oxoglutarate = glyoxylate + pyruvate. The catalysed reaction is (4R)-4-hydroxy-2-oxoglutarate = glyoxylate + pyruvate. Its activity is regulated as follows. Inhibited by divalent cations. In terms of biological role, catalyzes the final step in the metabolic pathway of hydroxyproline. Involved in osmoadaptation. The protein is Probable 4-hydroxy-2-oxoglutarate aldolase, mitochondrial of Emericella nidulans (strain FGSC A4 / ATCC 38163 / CBS 112.46 / NRRL 194 / M139) (Aspergillus nidulans).